We begin with the raw amino-acid sequence, 38 residues long: Photosystem II reaction center protein L (38 aa).

A helical membrane pass occupies residues 17 to 37 (SLYWGLLLIFVLAVPFSNYFF).

It belongs to the PsbL family. PSII is composed of 1 copy each of membrane proteins PsbA, PsbB, PsbC, PsbD, PsbE, PsbF, PsbH, PsbI, PsbJ, PsbK, PsbL, PsbM, PsbT, PsbX, PsbY, PsbZ, Psb30/Ycf12, at least 3 peripheral proteins of the oxygen-evolving complex and a large number of cofactors. It forms dimeric complexes.

It is found in the plastid. It localises to the chloroplast thylakoid membrane. Functionally, one of the components of the core complex of photosystem II (PSII). PSII is a light-driven water:plastoquinone oxidoreductase that uses light energy to abstract electrons from H(2)O, generating O(2) and a proton gradient subsequently used for ATP formation. It consists of a core antenna complex that captures photons, and an electron transfer chain that converts photonic excitation into a charge separation. This subunit is found at the monomer-monomer interface and is required for correct PSII assembly and/or dimerization. This Cedrus deodara (Deodar cedar) protein is Photosystem II reaction center protein L.